Reading from the N-terminus, the 518-residue chain is Glutamate--cysteine ligase (518 aa).

This sequence belongs to the glutamate--cysteine ligase type 1 family. Type 1 subfamily.

The enzyme catalyses L-cysteine + L-glutamate + ATP = gamma-L-glutamyl-L-cysteine + ADP + phosphate + H(+). The protein operates within sulfur metabolism; glutathione biosynthesis; glutathione from L-cysteine and L-glutamate: step 1/2. This Shigella flexneri serotype 5b (strain 8401) protein is Glutamate--cysteine ligase.